We begin with the raw amino-acid sequence, 556 residues long: Beta-hexosaminidase subunit beta (556 aa).

A signal peptide spans M1 to A42. A propeptide spanning residues A43 to K121 is cleaved from the precursor. N-linked (GlcNAc...) asparagine glycosylation is present at N84. A disulfide bridge connects residues C91 and C137. N-linked (GlcNAc...) asparagine glycans are attached at residues N142, N190, and N327. Intrachain disulfides connect C309/C360 and C534/C551. Residue E355 is the Proton donor of the active site.

The protein belongs to the glycosyl hydrolase 20 family. In terms of assembly, there are 3 forms of beta-hexosaminidase: hexosaminidase A is a heterodimer composed of one subunit alpha and one subunit beta (chain A and B); hexosaminidase B is a homodimer of two beta subunits (two chains A and B); hexosaminidase S is a homodimer of two alpha subunits. The composition of the dimer (isozyme A versus isozyme S) has a significant effect on the substrate specificity of the alpha subunit active site. Post-translationally, N-linked glycans at Asn-142 and Asn-190 consist of Man(3)-GlcNAc(2) and Man(5 to 7)-GlcNAc(2), respectively. In terms of processing, the beta-A and beta-B chains are produced by proteolytic processing of the precursor beta chain.

It is found in the lysosome. The protein resides in the cytoplasmic vesicle. Its subcellular location is the secretory vesicle. The protein localises to the cortical granule. It catalyses the reaction Hydrolysis of terminal non-reducing N-acetyl-D-hexosamine residues in N-acetyl-beta-D-hexosaminides.. The catalysed reaction is N-acetyl-beta-D-galactosaminyl-(1-&gt;4)-beta-D-3-sulfogalactosyl-(1-&gt;4)-beta-D-glucosyl-(1&lt;-&gt;1')-ceramide + H2O = a beta-D-3-sulfogalactosyl-(1-&gt;4)-beta-D-glucosyl-(1&lt;-&gt;1')-ceramide + N-acetyl-beta-D-galactosamine. The enzyme catalyses a ganglioside GM2 (d18:1(4E)) + H2O = a ganglioside GM3 (d18:1(4E)) + N-acetyl-beta-D-galactosamine. It carries out the reaction a ganglioside GM2 + H2O = a ganglioside GM3 + N-acetyl-beta-D-galactosamine. It catalyses the reaction beta-D-GalNAc-(1-&gt;4)-alpha-L-IdoA-(1-&gt;3)-beta-D-GalNAc-4-sulfate-(1-&gt;4)-alpha-L-IdoA-(1-&gt;3)-D-GalNAc-4-sulfate + H2O = alpha-L-IdoA-(1-&gt;3)-beta-D-GalNAc-4-sulfate-(1-&gt;4)-alpha-L-IdoA-(1-&gt;3)-D-GalNAc-4-sulfate + N-acetyl-D-galactosamine. The catalysed reaction is N-acetyl-beta-D-6-sulfogalactosaminyl-(1-&gt;4)-alpha-L-iduronyl-(1-&gt;3)-N-acetyl-D-6-sulfogalactosamine + H2O = alpha-L-iduronyl-(1-&gt;3)-N-acetyl-D-6-sulfogalactosamine + N-acetyl-D-6-sulfogalactosamine. Its activity is regulated as follows. Addition of GM2A stimulates the hydrolysis of sulfated glycosphingolipid SM2 and the ganglioside GM2. In terms of biological role, hydrolyzes the non-reducing end N-acetyl-D-hexosamine and/or sulfated N-acetyl-D-hexosamine of glycoconjugates, such as the oligosaccharide moieties from proteins and neutral glycolipids, or from certain mucopolysaccharides. The isozyme B does not hydrolyze each of these substrates, however hydrolyzes efficiently neutral oligosaccharide. Only the isozyme A is responsible for the degradation of GM2 gangliosides in the presence of GM2A. During fertilization is responsible, at least in part, for the zona block to polyspermy. Present in the cortical granules of non-activated oocytes, is exocytosed during the cortical reaction in response to oocyte activation and inactivates the sperm galactosyltransferase-binding site, accounting for the block in sperm binding to the zona pellucida. This is Beta-hexosaminidase subunit beta from Homo sapiens (Human).